The sequence spans 532 residues: Nucleobase-ascorbate transporter 6 (532 aa).

The disordered stretch occupies residues 1–24; the sequence is MAGGGAPAPKADEPQPHPPKDQLP. Over residues 10–20 the composition is skewed to basic and acidic residues; that stretch reads KADEPQPHPPK. Helical transmembrane passes span 39–59, 75–95, 97–117, 137–157, 163–185, 192–212, 223–243, 289–309, 361–381, 392–414, 426–446, and 463–483; these read AILLGFQHYLVMLGTTVLIPT, VIQTILFVAGINTLLQTLFGT, LPAVVGASYTFVPTTISIILS, TQGALIVASTLQMILGFSGLW, FLSPISAVPLVGLVGFGLYEFGF, IEIGLPELLILVFVSQYLPHV, FAVIFAVVIVWIYAHLLTVGG, FAMMMASFVALVESTGAFVAV, VGSRRVVQIAAGFMIFFSILG, APIIAALYCLFFAYVGAGGLSFL, FILGFSVFLGLSIPQYFNEYT, and DMVNVPFSSEPFVAGSVAFFL.

Belongs to the nucleobase:cation symporter-2 (NCS2) (TC 2.A.40) family. As to expression, expressed in the apical region of cotyledons 4 days after imbibition (DAI). Expressed in the whole vasculature at 12 DAI. Expressed in the root central cylinder and lateral root primordia. Expressed in the vasculature of sepals, filaments, carpels and developing siliques.

Its subcellular location is the membrane. This is Nucleobase-ascorbate transporter 6 (NAT6) from Arabidopsis thaliana (Mouse-ear cress).